Reading from the N-terminus, the 171-residue chain is uncharacterized protein (171 aa).

2 disordered regions span residues 27-53 (DCPG…KMVL) and 82-108 (GHLE…PSSS). The segment covering 32-50 (GNNNREPSISTRGRTSSSK) has biased composition (polar residues).

This is an uncharacterized protein from Homo sapiens (Human).